Reading from the N-terminus, the 260-residue chain is Ras-related protein Rab-26 (260 aa).

The disordered stretch occupies residues 1 to 56 (MSRKKTPKSKGGSEPATSTLPAAAAATNGPRLAHPRTVRPGPEAPPNGPPQSIRPS). Residues S76, G77, V78, G79, K80, T81, C82, S99, and T100 each coordinate GTP. T81 provides a ligand contact to Mg(2+). 2 consecutive short sequence motifs (switch) follow at residues 90-105 (GAFL…GIDF) and 123-140 (DTAG…YYRD). Residues T100 and D123 each coordinate Mg(2+). GTP-binding residues include G126, N181, K182, D184, A212, and R213. 2 S-geranylgeranyl cysteine lipidation sites follow: C257 and C258.

The protein belongs to the small GTPase superfamily. Rab family. Interacts with ADRA2B. Interacts with RIMS1. Requires Mg(2+) as cofactor. In terms of tissue distribution, detected in zymogenic cells in the stomach.

The protein resides in the cytoplasmic vesicle. Its subcellular location is the secretory vesicle membrane. It is found in the golgi apparatus membrane. It carries out the reaction GTP + H2O = GDP + phosphate + H(+). Regulated by guanine nucleotide exchange factors (GEFs) which promote the exchange of bound GDP for free GTP. Regulated by GTPase activating proteins (GAPs) which increase the GTP hydrolysis activity. Inhibited by GDP dissociation inhibitors (GDIs). In terms of biological role, the small GTPases Rab are key regulators of intracellular membrane trafficking, from the formation of transport vesicles to their fusion with membranes. Rabs cycle between an inactive GDP-bound form and an active GTP-bound form that is able to recruit to membranes different set of downstream effectors directly responsible for vesicle formation, movement, tethering and fusion. RAB26 mediates transport of ADRA2A and ADRA2B from the Golgi to the cell membrane. Plays a role in the maturation of zymogenic granules and in pepsinogen secretion in the stomach. Plays a role in the secretion of amylase from acinar granules in the parotid gland. The sequence is that of Ras-related protein Rab-26 from Mus musculus (Mouse).